A 162-amino-acid chain; its full sequence is Caveolin-2 (162 aa).

Residues Met1 to Lys86 are Cytoplasmic-facing. Residue Tyr19 is modified to Phosphotyrosine; by SRC. Phosphoserine occurs at positions 20 and 23. Phosphotyrosine; by SRC is present on Tyr27. Ser36 bears the Phosphoserine mark. Residues Phe87–Leu107 constitute an intramembrane region (helical). Residues Ser108–Asp162 are Cytoplasmic-facing.

It belongs to the caveolin family. In terms of assembly, monomer or homodimer. Interacts with CAV1; the interaction forms a stable heterooligomeric complex that is required for targeting to lipid rafts and for caveolae formation. Tyrosine phosphorylated forms do not form heterooligomers with the Tyr-19-phosphorylated form existing as a monomer or dimer, and the Tyr-27-form as a monomer only. Interacts (tyrosine phosphorylated form) with the SH2 domain-containing proteins, RASA1, NCK1 and SRC. Interacts (tyrosine phosphorylated form) with INSR, the interaction (Tyr-27-phosphorylated form) is increased on insulin stimulation. Interacts (Tyr-19 phosphorylated form) with MAPK1 (phosphorylated form); the interaction, promoted by insulin, leads to nuclear location and MAPK1 activation. Interacts with STAT3; the interaction is increased on insulin-induced tyrosine phosphorylation leading to STAT activation. Post-translationally, phosphorylated on serine and tyrosine residues. CAV1 promotes phosphorylation on Ser-23 which then targets the complex to the plasma membrane, lipid rafts and caveolae. Phosphorylation on Ser-36 appears to modulate mitosis in endothelial cells. Phosphorylation on both Tyr-19 and Tyr-27 is required for insulin-induced 'Ser-727' phosphorylation of STAT3 and its activation. Phosphorylation on Tyr-19 is required for insulin-induced phosphorylation of MAPK1 and DNA binding of STAT3. Tyrosine phosphorylation is induced by both EGF and insulin (By. similarity).

The protein localises to the nucleus. The protein resides in the cytoplasm. It localises to the golgi apparatus membrane. Its subcellular location is the cell membrane. It is found in the membrane. The protein localises to the caveola. Functionally, may act as a scaffolding protein within caveolar membranes. Interacts directly with G-protein alpha subunits and can functionally regulate their activity. Acts as an accessory protein in conjunction with CAV1 in targeting to lipid rafts and driving caveolae formation. The Ser-36 phosphorylated form has a role in modulating mitosis in endothelial cells. Positive regulator of cellular mitogenesis of the MAPK signaling pathway. Required for the insulin-stimulated nuclear translocation and activation of MAPK1 and STAT3, and the subsequent regulation of cell cycle progression. This chain is Caveolin-2 (CAV2), found in Aotus nancymaae (Ma's night monkey).